We begin with the raw amino-acid sequence, 140 residues long: Sex-regulated protein janus-B (140 aa).

R42 contributes to the substrate binding site. Catalysis depends on H69, which acts as the Proton acceptor. 110 to 112 contacts substrate; sequence SRT.

It belongs to the janus family. Germline cells of adult males.

In terms of biological role, janA and janB regulate somatic sex differentiation. The sequence is that of Sex-regulated protein janus-B (janB) from Drosophila melanogaster (Fruit fly).